We begin with the raw amino-acid sequence, 201 residues long: ATP-dependent dethiobiotin synthetase BioD (201 aa).

11 to 16 (DVGKTH) contributes to the ATP binding site. Position 15 (threonine 15) interacts with Mg(2+). Lysine 31 is an active-site residue. ATP-binding positions include aspartate 40 and 93-96 (ELAG). The Mg(2+) site is built by aspartate 40 and glutamate 93.

This sequence belongs to the dethiobiotin synthetase family. Homodimer. The cofactor is Mg(2+).

It is found in the cytoplasm. It catalyses the reaction (7R,8S)-7,8-diammoniononanoate + CO2 + ATP = (4R,5S)-dethiobiotin + ADP + phosphate + 3 H(+). It functions in the pathway cofactor biosynthesis; biotin biosynthesis; biotin from 7,8-diaminononanoate: step 1/2. Functionally, catalyzes a mechanistically unusual reaction, the ATP-dependent insertion of CO2 between the N7 and N8 nitrogen atoms of 7,8-diaminopelargonic acid (DAPA, also called 7,8-diammoniononanoate) to form a ureido ring. This Campylobacter jejuni subsp. jejuni serotype O:6 (strain 81116 / NCTC 11828) protein is ATP-dependent dethiobiotin synthetase BioD.